The chain runs to 978 residues: uncharacterized protein (978 aa).

The N-terminal stretch at 1–27 is a signal peptide; it reads MHSWKKKLVVSQLALACTLAITSQANA. The Autotransporter domain occupies 713-978; it reads GLADNGGAWV…SANVGVKYTW (266 aa).

This is an uncharacterized protein from Salmonella typhimurium (strain LT2 / SGSC1412 / ATCC 700720).